Consider the following 526-residue polypeptide: Cytochrome P450 monooxygenase COX2 (526 aa).

An N-linked (GlcNAc...) asparagine glycan is attached at N11. The helical transmembrane segment at 12–31 (ITTNHVAAAVCAGIAVYAIV) threads the bilayer. N-linked (GlcNAc...) asparagine glycosylation occurs at N302. Residue C450 coordinates heme.

Belongs to the cytochrome P450 family. The cofactor is heme.

The protein localises to the membrane. It participates in secondary metabolite biosynthesis. Cytochrome P450 monooxygenase; part of the gene cluster that mediates the biosynthesis of alpha-cuprenene and oxidized derivatives. The alpha-cuprenene synthase COP6 is the only sesquiterpene synthase identified in C.cinereus that appears to be part of a biosynthetic gene cluster and is highly specific since it catalyzes the cyclization of (2E,6E)-farnesyl diphosphate into only one product, alpha-cuprenene. The cytochrome P450 monooxygenase COX2 then oxidizes the cyclohexadiene ring of alpha-cuprenene at positions 1 and 4, yielding first alpha-cuparene, followed by alpha-cuparophenol and a further yet unidentified compound resulting from one additional oxidation step. The cytochrome P450 monooxygenase COX1 then likely catalyzes the oxidation at position 9 of the pentane ring of alpha-cuprenene to give the corresponding hydroxy or ketone derivatives. The polypeptide is Cytochrome P450 monooxygenase COX2 (Coprinopsis cinerea (strain Okayama-7 / 130 / ATCC MYA-4618 / FGSC 9003) (Inky cap fungus)).